The following is a 193-amino-acid chain: Rho-related protein racB (193 aa).

Residues Ala13, Gly15, Lys16, Thr17, Cys18, Tyr32, Thr35, Gly60, Lys116, Asp118, and Ala159 each coordinate GTP. Thr17 lines the Mg(2+) pocket. Short sequence motifs (switch) lie at residues 26–37 (NAFPTEYVPTVF) and 57–75 (DTAG…YPQT). A Mg(2+)-binding site is contributed by Thr35. Cys190 carries the cysteine methyl ester modification. Cys190 is lipidated: S-geranylgeranyl cysteine. A propeptide spans 191 to 193 (LIF) (removed in mature form).

Belongs to the small GTPase superfamily. Rho family. The cofactor is Mg(2+).

It is found in the cell membrane. Its subcellular location is the cytoplasm. The protein localises to the cytoskeleton. It catalyses the reaction GTP + H2O = GDP + phosphate + H(+). Its activity is regulated as follows. Regulated by guanine nucleotide exchange factors (GEFs) which promote the exchange of bound GDP for free GTP, GTPase activating proteins (GAPs) which increase the GTP hydrolysis activity, and GDP dissociation inhibitors which inhibit the dissociation of the nucleotide from the GTPase. Functionally, small GTPase which cycles between active GTP-bound and inactive GDP-bound states. In Entamoeba histolytica (strain ATCC 30459 / HM-1:IMSS / ABRM), this protein is Rho-related protein racB.